A 309-amino-acid polypeptide reads, in one-letter code: Ubiquitin-conjugating enzyme E2 32 (309 aa).

A UBC core domain is found at 11 to 166 (PAVKRILQEV…ERQKIIDEIH (156 aa)). The active-site Glycyl thioester intermediate is the cysteine 93. Residues 275–295 (FTWAAVGLTIAIMVLLLKKFI) form a helical membrane-spanning segment.

Belongs to the ubiquitin-conjugating enzyme family.

It localises to the membrane. It carries out the reaction S-ubiquitinyl-[E1 ubiquitin-activating enzyme]-L-cysteine + [E2 ubiquitin-conjugating enzyme]-L-cysteine = [E1 ubiquitin-activating enzyme]-L-cysteine + S-ubiquitinyl-[E2 ubiquitin-conjugating enzyme]-L-cysteine.. The protein operates within protein modification; protein ubiquitination. In terms of biological role, accepts the ubiquitin from the E1 complex and catalyzes its covalent attachment to other proteins. This is Ubiquitin-conjugating enzyme E2 32 (UBC32) from Arabidopsis thaliana (Mouse-ear cress).